The following is a 1024-amino-acid chain: Beta-galactosidase (1024 aa).

The substrate site is built by Asn-103 and Asp-202. Asp-202 is a Na(+) binding site. Mg(2+)-binding residues include Glu-417, His-419, and Glu-462. Substrate contacts are provided by residues Glu-462 and 538–541; that span reads EYAH. The active-site Proton donor is Glu-462. Glu-538 acts as the Nucleophile in catalysis. Asn-598 serves as a coordination point for Mg(2+). Phe-602 and Asn-605 together coordinate Na(+). Residues Asn-605 and Trp-1000 each coordinate substrate.

It belongs to the glycosyl hydrolase 2 family. As to quaternary structure, homotetramer. Mg(2+) serves as cofactor. Requires Na(+) as cofactor.

The catalysed reaction is Hydrolysis of terminal non-reducing beta-D-galactose residues in beta-D-galactosides.. The protein is Beta-galactosidase of Shigella sonnei (strain Ss046).